A 311-amino-acid chain; its full sequence is Olfactory receptor 1073 (311 aa).

The Extracellular portion of the chain corresponds to 1 to 25 (MKQQNDTQILQFLLLGLSENTELQP). Asparagine 5 carries an N-linked (GlcNAc...) asparagine glycan. A helical membrane pass occupies residues 26–46 (LIYWLFFSMYLVTVWGNLIII). Topologically, residues 47-57 (LATVLDFRLHT) are cytoplasmic. Residues 58 to 78 (AMYFFLCNLSFVDICLISTTI) traverse the membrane as a helical segment. The Extracellular portion of the chain corresponds to 79–97 (PKMLANVHLNHKAITYEGC). Cysteine 97 and cysteine 179 form a disulfide bridge. Residues 98–118 (IMQIYFFTLFVGLDNFLLAVM) form a helical membrane-spanning segment. The Cytoplasmic segment spans residues 119–133 (AYDRFVAICHPLRYT). Residues 134-154 (SIMTPHLCMSLVLVSWIASVL) traverse the membrane as a helical segment. Asparagine 155 carries N-linked (GlcNAc...) asparagine glycosylation. At 155 to 196 (NSSLQSFLVLQLSFCTEVEIPHFFCELSMLVHLACSDTFLSD) the chain is on the extracellular side. A helical transmembrane segment spans residues 197 to 217 (MAMNVLAALLGGGCLVGILYS). At 218-244 (YSKIVSSIQAISSAEGKYKAFSTCVSH) the chain is on the cytoplasmic side. The helical transmembrane segment at 245 to 265 (LSVVSLFYCTLLGVYLSSAVT) threads the bilayer. At 266–271 (QNSHST) the chain is on the extracellular side. A helical transmembrane segment spans residues 272–292 (AATSLMYTVVTPMLNPFIYSL). The Cytoplasmic segment spans residues 293-311 (RNDNIKRALKNFVKKKLEK).

It belongs to the G-protein coupled receptor 1 family. In terms of tissue distribution, tongue specific.

It localises to the cell membrane. Functionally, possible taste receptor. The chain is Olfactory receptor 1073 (Olr1073) from Rattus norvegicus (Rat).